Here is a 561-residue protein sequence, read N- to C-terminus: Zinc finger protein 394 (561 aa).

The residue at position 12 (Ser12) is a Phosphoserine. A Glycyl lysine isopeptide (Lys-Gly) (interchain with G-Cter in SUMO2) cross-link involves residue Lys40. Residues 43-62 are disordered; it reads EDSLGSWEPSYPAASPDPET. The region spanning 64–146 is the SCAN box domain; it reads RLHFRQLRYQ…AVVRALQRAL (83 aa). The region spanning 155–230 is the KRAB domain; the sequence is VTFEDMAVSL…LQEAFQGKRP (76 aa). Residues Lys203 and Lys228 each participate in a glycyl lysine isopeptide (Lys-Gly) (interchain with G-Cter in SUMO2) cross-link. Residues 238 to 247 are compositionally biased toward basic and acidic residues; sequence THEDRVEKQS. Positions 238–283 are disordered; that stretch reads THEDRVEKQSGDPLPLKLENSPEAEGFNSISDVNKNGSIEGEDSKN. Lys254 participates in a covalent cross-link: Glycyl lysine isopeptide (Lys-Gly) (interchain with G-Cter in SUMO2). Residues 265-274 are compositionally biased toward polar residues; the sequence is NSISDVNKNG. Lys282 is covalently cross-linked (Glycyl lysine isopeptide (Lys-Gly) (interchain with G-Cter in SUMO2)). C2H2-type zinc fingers lie at residues 358-380, 386-408, 414-436, 442-463, 469-491, 497-519, and 525-547; these read YKCG…QRIH, YGCQ…QRTH, YTCL…QSTH, FKCE…QRLH, YKCE…HRIH, YGCS…QRIH, and YKCL…QRIH. Lys443 participates in a covalent cross-link: Glycyl lysine isopeptide (Lys-Gly) (interchain with G-Cter in SUMO2).

This sequence belongs to the krueppel C2H2-type zinc-finger protein family.

The protein localises to the nucleus. Functionally, may be involved in transcriptional regulation. The polypeptide is Zinc finger protein 394 (ZNF394) (Pan paniscus (Pygmy chimpanzee)).